We begin with the raw amino-acid sequence, 124 residues long: Peptidyl-tRNA hydrolase (124 aa).

The protein belongs to the PTH2 family.

It is found in the cytoplasm. The catalysed reaction is an N-acyl-L-alpha-aminoacyl-tRNA + H2O = an N-acyl-L-amino acid + a tRNA + H(+). In terms of biological role, the natural substrate for this enzyme may be peptidyl-tRNAs which drop off the ribosome during protein synthesis. This chain is Peptidyl-tRNA hydrolase, found in Aeropyrum pernix (strain ATCC 700893 / DSM 11879 / JCM 9820 / NBRC 100138 / K1).